A 65-amino-acid polypeptide reads, in one-letter code: Conotoxin VnMLCL-041 (65 aa).

A signal peptide spans 1 to 19 (MLCLPVFIILLLLASPAAP). Positions 20–43 (NPLQTRIQSNLIRAGPEDANIKTD) are excised as a propeptide. The residue at position 64 (lysine 64) is a Lysine amide.

Belongs to the conotoxin T superfamily. Expressed by the venom duct.

It is found in the secreted. In Conus ventricosus (Mediterranean cone), this protein is Conotoxin VnMLCL-041.